A 472-amino-acid polypeptide reads, in one-letter code: Cysteine--tRNA ligase (472 aa).

Cysteine 29 is a Zn(2+) binding site. Positions proline 31–asparagine 41 match the 'HIGH' region motif. The Zn(2+) site is built by cysteine 214, histidine 239, and glutamate 243. The 'KMSKS' region motif lies at lysine 273–serine 277. Residue lysine 276 participates in ATP binding.

Belongs to the class-I aminoacyl-tRNA synthetase family. In terms of assembly, monomer. It depends on Zn(2+) as a cofactor.

It is found in the cytoplasm. It catalyses the reaction tRNA(Cys) + L-cysteine + ATP = L-cysteinyl-tRNA(Cys) + AMP + diphosphate. In Lactobacillus gasseri (strain ATCC 33323 / DSM 20243 / BCRC 14619 / CIP 102991 / JCM 1131 / KCTC 3163 / NCIMB 11718 / NCTC 13722 / AM63), this protein is Cysteine--tRNA ligase.